The sequence spans 561 residues: ATP-dependent rRNA helicase RRP3 (561 aa).

Composition is skewed to low complexity over residues 1–23 and 30–45; these read MPKA…SSNS and ASSP…PSTS. Positions 1–109 are disordered; that stretch reads MPKASASSAK…DEKKVATIAD (109 aa). Over residues 100–109 the composition is skewed to basic and acidic residues; sequence DEKKVATIAD. The Q motif motif lies at 114 to 142; that stretch reads VEFSDLGVIPQIVEACTNMGFKHPTPIQV. Positions 145–316 constitute a Helicase ATP-binding domain; the sequence is IPEALQARDV…RASLKNPVRV (172 aa). Position 158 to 165 (158 to 165) interacts with ATP; the sequence is AQTGSGKT. Residues 264 to 267 carry the DEAD box motif; it reads DEAD. Residues 339-487 enclose the Helicase C-terminal domain; that stretch reads HKDTYLVHLA…EFPGGNDKEA (149 aa). Residues 506–561 are disordered; sequence LKDKGVGSAGGSGKRKRKMDGKYGDDMDRDDDQVQAGLPVSGNGRHQNQNRKKGRR.

Belongs to the DEAD box helicase family. DDX47/RRP3 subfamily. Interacts with the SSU processome.

It is found in the nucleus. It catalyses the reaction ATP + H2O = ADP + phosphate + H(+). Functionally, ATP-dependent rRNA helicase required for pre-ribosomal RNA processing. Involved in the maturation of the 35S-pre-rRNA and to its cleavage to mature 18S rRNA. The protein is ATP-dependent rRNA helicase RRP3 of Mycosarcoma maydis (Corn smut fungus).